The chain runs to 280 residues: DegV domain-containing protein spyM18_1709 (280 aa).

A DegV domain is found at 3–280; it reads WKIVTDSGCD…DGGLLMGYEI (278 aa). 2 residues coordinate hexadecanoate: Ser-63 and Ser-91.

Functionally, may bind long-chain fatty acids, such as palmitate, and may play a role in lipid transport or fatty acid metabolism. The chain is DegV domain-containing protein spyM18_1709 from Streptococcus pyogenes serotype M18 (strain MGAS8232).